We begin with the raw amino-acid sequence, 885 residues long: Probable alpha-glucosidase Os06g0675700 (885 aa).

A signal peptide spans 1–33 (MMGSPPAPPARRLGALAVFLLALFLAAPWGVDC). N-linked (GlcNAc...) asparagine glycans are attached at residues Asn195, Asn378, and Asn397. Catalysis depends on residues Asp443 and Glu446. 2 N-linked (GlcNAc...) asparagine glycosylation sites follow: Asn467 and Asn477. The Proton donor role is filled by Asp540. 2 N-linked (GlcNAc...) asparagine glycosylation sites follow: Asn576 and Asn844.

Belongs to the glycosyl hydrolase 31 family.

It carries out the reaction Hydrolysis of terminal, non-reducing (1-&gt;4)-linked alpha-D-glucose residues with release of alpha-D-glucose.. The protein is Probable alpha-glucosidase Os06g0675700 of Oryza sativa subsp. japonica (Rice).